The sequence spans 110 residues: UPF0145 protein BLD_1357 (110 aa).

Belongs to the UPF0145 family.

This is UPF0145 protein BLD_1357 from Bifidobacterium longum (strain DJO10A).